A 462-amino-acid polypeptide reads, in one-letter code: MFSRTASKFRNTRRLLSTISSQIPGTRTSKLPNGLTIATEYIPNTSSATVGIFVDAGSRAENVKNNGTAHFLEHLAFKGTQNRSQQGIELEIENIGSHLNAYTSRENTVYYAKSLQEDIPKAVDILSDILTKSVLDNSAIERERDVIIRESEEVDKMYDEVVFDHLHEITYKDQPLGRTILGPIKNIKSITRTDLKDYITKNYKGDRMVLAGAGAVDHEKLVQYAQKYFGHVPKSESPVPLGSPRGPLPVFCRGERFIKENTLPTTHIAIALEGVSWSAPDYFVALATQAIVGNWDRAIGTGTNSPSPLAVAASQNGSLANSYMSFSTSYADSGLWGMYIVTDSNEHNVQLIVNEILKEWKRIKSGKISDAEVNRAKAQLKAALLLSLDGSTAIVEDIGRQVVTTGKRLSPEEVFEQVDKITKDDIIMWANYRLQNKPVSMVALGNTSTVPNVSYIEEKLNQ.

The transit peptide at 1–20 (MFSRTASKFRNTRRLLSTIS) directs the protein to the mitochondrion. H70 provides a ligand contact to Zn(2+). The active-site Proton acceptor is the E73. Residues H74 and E150 each coordinate Zn(2+). S243 carries the post-translational modification Phosphoserine.

The protein belongs to the peptidase M16 family. Heterodimer of MAS2 (alpha) and MAS1 (beta) subunits, forming the mitochondrial processing protease (MPP) in which MAS2 is involved in substrate recognition and binding and MAS1 is the catalytic subunit. Requires Zn(2+) as cofactor.

It is found in the mitochondrion matrix. It catalyses the reaction Release of N-terminal transit peptides from precursor proteins imported into the mitochondrion, typically with Arg in position P2.. Its activity is regulated as follows. Binding to MAS2 is required for catalytic activity. Inhibited by high levels (&gt; 1uM) of zinc. Inhibited by metal chelators ethylenediaminetetraacetic acid (EDTA) and O-phenanthroline. Catalytic subunit of the essential mitochondrial processing protease (MPP), which cleaves the mitochondrial sequence off newly imported precursors proteins. Preferentially, cleaves after an arginine at position P2. The chain is Mitochondrial-processing peptidase subunit beta from Saccharomyces cerevisiae (strain ATCC 204508 / S288c) (Baker's yeast).